We begin with the raw amino-acid sequence, 260 residues long: tRNA1(Val) (adenine(37)-N6)-methyltransferase (260 aa).

This sequence belongs to the methyltransferase superfamily. tRNA (adenine-N(6)-)-methyltransferase family.

It localises to the cytoplasm. The enzyme catalyses adenosine(37) in tRNA1(Val) + S-adenosyl-L-methionine = N(6)-methyladenosine(37) in tRNA1(Val) + S-adenosyl-L-homocysteine + H(+). Specifically methylates the adenine in position 37 of tRNA(1)(Val) (anticodon cmo5UAC). This Serratia proteamaculans (strain 568) protein is tRNA1(Val) (adenine(37)-N6)-methyltransferase.